We begin with the raw amino-acid sequence, 377 residues long: UDP-N-acetylglucosamine--N-acetylmuramyl-(pentapeptide) pyrophosphoryl-undecaprenol N-acetylglucosamine transferase (377 aa).

UDP-N-acetyl-alpha-D-glucosamine contacts are provided by residues 29-31 (TAG), N142, R179, S213, and Q308.

The protein belongs to the glycosyltransferase 28 family. MurG subfamily.

The protein resides in the cell membrane. The catalysed reaction is di-trans,octa-cis-undecaprenyl diphospho-N-acetyl-alpha-D-muramoyl-L-alanyl-D-glutamyl-meso-2,6-diaminopimeloyl-D-alanyl-D-alanine + UDP-N-acetyl-alpha-D-glucosamine = di-trans,octa-cis-undecaprenyl diphospho-[N-acetyl-alpha-D-glucosaminyl-(1-&gt;4)]-N-acetyl-alpha-D-muramoyl-L-alanyl-D-glutamyl-meso-2,6-diaminopimeloyl-D-alanyl-D-alanine + UDP + H(+). It functions in the pathway cell wall biogenesis; peptidoglycan biosynthesis. In terms of biological role, cell wall formation. Catalyzes the transfer of a GlcNAc subunit on undecaprenyl-pyrophosphoryl-MurNAc-pentapeptide (lipid intermediate I) to form undecaprenyl-pyrophosphoryl-MurNAc-(pentapeptide)GlcNAc (lipid intermediate II). This Saccharopolyspora erythraea (strain ATCC 11635 / DSM 40517 / JCM 4748 / NBRC 13426 / NCIMB 8594 / NRRL 2338) protein is UDP-N-acetylglucosamine--N-acetylmuramyl-(pentapeptide) pyrophosphoryl-undecaprenol N-acetylglucosamine transferase.